A 42-amino-acid polypeptide reads, in one-letter code: Delta-hexatoxin-Hv1b (42 aa).

Intrachain disulfides connect cysteine 1/cysteine 15, cysteine 8/cysteine 20, cysteine 14/cysteine 31, and cysteine 16/cysteine 42.

Belongs to the neurotoxin 06 (delta-actx) family. In terms of tissue distribution, expressed by the venom gland.

It localises to the secreted. Its function is as follows. Lethal neurotoxin. Slows the inactivation of tetrodotoxin-sensitive voltage-gated sodium channels (Nav) by binding to site 3 of the channel, resulting in repetitive firing in autonomic and motor nerve fibers. The polypeptide is Delta-hexatoxin-Hv1b (Hadronyche versuta (Blue mountains funnel-web spider)).